A 511-amino-acid polypeptide reads, in one-letter code: uncharacterized protein (511 aa).

Residues 59-79 are disordered; that stretch reads VPVAANDDQPDGSRQSVRGRQ.

This sequence belongs to the transposase 25 family.

This is an uncharacterized protein from Sinorhizobium fredii (strain NBRC 101917 / NGR234).